We begin with the raw amino-acid sequence, 515 residues long: Protein pid-4 (515 aa).

The disordered stretch occupies residues 496-515; the sequence is DRSPQKFKFPASGSYMKPAN.

May interact with pid-2, app-1 and prmt-5.

The protein resides in the cytoplasm. The protein localises to the perinuclear region. It is found in the P-body. Its function is as follows. Together with pid-5, it is involved in gene silencing mediated by a class of 21 nucleotide PIWI-interacting RNAs (piRNAs) that possess a uracil residue at the 5'-end (also called 21U-RNAs) and guide the Piwi protein prg-1 to its DNA targets for silencing. Together with pid-5, it is required for the biogenesis of secondary and tertiary 22G-siRNAs. Specifically, promotes the production of 22G-siRNAs from the 5' end of target mRNAs. Together with pid-5, plays a role in small RNA-directed transgenerational epigenetic inheritance (also called RNAe) over several generations and germline immortality. Together with pid-5, plays a role in the formation of liquid-like condensates in the cytoplasm called Z granules. The polypeptide is Protein pid-4 (Caenorhabditis elegans).